The following is a 214-amino-acid chain: Pyridoxine/pyridoxamine 5'-phosphate oxidase (214 aa).

Substrate contacts are provided by residues 8 to 11 (RTNY) and Lys-66. FMN contacts are provided by residues 61–66 (RIVLIK), 76–77 (FT), Arg-82, Lys-83, and Gln-105. Tyr-123, Arg-127, and Ser-131 together coordinate substrate. Residues 140–141 (QS) and Trp-184 contribute to the FMN site. Substrate is bound at residue 190 to 192 (RLH). Arg-194 is an FMN binding site.

Belongs to the pyridoxamine 5'-phosphate oxidase family. Homodimer. Requires FMN as cofactor.

It carries out the reaction pyridoxamine 5'-phosphate + O2 + H2O = pyridoxal 5'-phosphate + H2O2 + NH4(+). The enzyme catalyses pyridoxine 5'-phosphate + O2 = pyridoxal 5'-phosphate + H2O2. It functions in the pathway cofactor metabolism; pyridoxal 5'-phosphate salvage; pyridoxal 5'-phosphate from pyridoxamine 5'-phosphate: step 1/1. The protein operates within cofactor metabolism; pyridoxal 5'-phosphate salvage; pyridoxal 5'-phosphate from pyridoxine 5'-phosphate: step 1/1. Functionally, catalyzes the oxidation of either pyridoxine 5'-phosphate (PNP) or pyridoxamine 5'-phosphate (PMP) into pyridoxal 5'-phosphate (PLP). The protein is Pyridoxine/pyridoxamine 5'-phosphate oxidase of Burkholderia mallei (strain NCTC 10247).